The following is a 347-amino-acid chain: Selenide, water dikinase (347 aa).

The active site involves cysteine 17. ATP contacts are provided by residues lysine 20 and threonine 48–aspartate 50. Aspartate 51 contacts Mg(2+). ATP is bound by residues aspartate 68, aspartate 91, and glycine 139–serine 141. Aspartate 91 is a Mg(2+) binding site. Mg(2+) is bound at residue aspartate 227.

Belongs to the selenophosphate synthase 1 family. Class I subfamily. In terms of assembly, homodimer. Mg(2+) is required as a cofactor.

The enzyme catalyses hydrogenselenide + ATP + H2O = selenophosphate + AMP + phosphate + 2 H(+). Its function is as follows. Synthesizes selenophosphate from selenide and ATP. The polypeptide is Selenide, water dikinase (Shigella flexneri serotype 5b (strain 8401)).